Here is a 251-residue protein sequence, read N- to C-terminus: Cell division protein ZapD (251 aa).

Belongs to the ZapD family. Interacts with FtsZ.

The protein localises to the cytoplasm. Functionally, cell division factor that enhances FtsZ-ring assembly. Directly interacts with FtsZ and promotes bundling of FtsZ protofilaments, with a reduction in FtsZ GTPase activity. The protein is Cell division protein ZapD of Janthinobacterium sp. (strain Marseille) (Minibacterium massiliensis).